The chain runs to 461 residues: tRNA modification GTPase MnmE (461 aa).

(6S)-5-formyl-5,6,7,8-tetrahydrofolate is bound by residues Arg-20, Glu-85, and Lys-124. Positions 221 to 383 (GIPVAIIGET…LQQLLTEVSS (163 aa)) constitute a TrmE-type G domain. Asn-231 is a binding site for K(+). GTP-binding positions include 231–236 (NAGKST), 250–256 (SDIHGTT), and 275–278 (DTAG). Ser-235 is a binding site for Mg(2+). Residues Ser-250, Ile-252, and Thr-255 each coordinate K(+). Residue Thr-256 participates in Mg(2+) binding. Lys-461 is a binding site for (6S)-5-formyl-5,6,7,8-tetrahydrofolate.

Belongs to the TRAFAC class TrmE-Era-EngA-EngB-Septin-like GTPase superfamily. TrmE GTPase family. As to quaternary structure, homodimer. Heterotetramer of two MnmE and two MnmG subunits. Requires K(+) as cofactor.

It is found in the cytoplasm. In terms of biological role, exhibits a very high intrinsic GTPase hydrolysis rate. Involved in the addition of a carboxymethylaminomethyl (cmnm) group at the wobble position (U34) of certain tRNAs, forming tRNA-cmnm(5)s(2)U34. The sequence is that of tRNA modification GTPase MnmE from Parabacteroides distasonis (strain ATCC 8503 / DSM 20701 / CIP 104284 / JCM 5825 / NCTC 11152).